Reading from the N-terminus, the 289-residue chain is ATP synthase gamma chain (289 aa).

Belongs to the ATPase gamma chain family. F-type ATPases have 2 components, CF(1) - the catalytic core - and CF(0) - the membrane proton channel. CF(1) has five subunits: alpha(3), beta(3), gamma(1), delta(1), epsilon(1). CF(0) has three main subunits: a, b and c.

It is found in the cell membrane. Produces ATP from ADP in the presence of a proton gradient across the membrane. The gamma chain is believed to be important in regulating ATPase activity and the flow of protons through the CF(0) complex. The sequence is that of ATP synthase gamma chain from Hamiltonella defensa subsp. Acyrthosiphon pisum (strain 5AT).